A 912-amino-acid polypeptide reads, in one-letter code: Androgen receptor (912 aa).

The segment at 1–550 (MEVQLGLGRV…PIDYYFPPQK (550 aa)) is modulating. The tract at residues 1–579 (MEVQLGLGRV…GSCKVFFKRA (579 aa)) is interaction with ZNF318. Disordered regions lie at residues 35-156 (QNPG…GPTF) and 204-236 (QQQQEVVSEGGSSGRAREAAGAPTSSKDSYLGG). Ser-69 carries the phosphoserine; by CDK9 modification. Position 82 is a phosphoserine (Ser-82). Low complexity predominate over residues 204-213 (QQQQEVVSEG). Residues 226–236 (PTSSKDSYLGG) show a composition bias toward polar residues. Phosphotyrosine; by CSK is present on Tyr-233. Residue Ser-266 is modified to Phosphoserine. Tyr-277 carries the phosphotyrosine; by CSK and TNK2 modification. Phosphotyrosine; by CSK is present on residues Tyr-315, Tyr-354, Tyr-365, and Tyr-370. Residue Tyr-371 is modified to Phosphotyrosine; by CSK and TNK2. Positions 375–394 (LSLAGPPPPPPSPHPHARIK) are disordered. The segment covering 379–388 (GPPPPPPSPH) has biased composition (pro residues). A Glycyl lysine isopeptide (Lys-Gly) (interchain with G-Cter in SUMO) cross-link involves residue Lys-394. Tyr-401 is subject to Phosphotyrosine; by CSK. Positions 452–490 (LYGPCGGSGGGGTGESVSVTPYGYTRPQQGLTGQEGDFP) are disordered. Gly residues predominate over residues 455 to 465 (PCGGSGGGGTG). A Glycyl lysine isopeptide (Lys-Gly) (interchain with G-Cter in SUMO) cross-link involves residue Lys-513. Residues Tyr-527 and Tyr-544 each carry the phosphotyrosine; by CSK modification. The interaction with LPXN stretch occupies residues 544-911 (YYFPPQKTCL…GKVKPIYFHT (368 aa)). Residues 551-624 (TCLICGDEAS…AGMTLGARRL (74 aa)) constitute a DNA-binding region (nuclear receptor). 2 consecutive NR C4-type zinc fingers follow at residues 552–572 (CLICGDEASGCHYGALTCGSC) and 588–612 (CASRNDCTIDKFRRKNCPPCRLRKC). Residues 564-654 (YGALTCGSCK…TEETTQKLTV (91 aa)) form an interaction with HIPK3 region. The segment at 584–911 (QKYLCASRND…GKVKPIYFHT (328 aa)) is interaction with CCAR1. The tract at residues 617–911 (MTLGARRLKK…GKVKPIYFHT (295 aa)) is interaction with KAT7. The residue at position 643 (Ser-643) is a Phosphoserine; by STK4/MST1. One can recognise an NR LBD domain in the interval 661 to 892 (ECQPIFLNVL…DFPEMMAEII (232 aa)). Residues Asn-698 and Arg-745 each contribute to the 17beta-hydroxy-5alpha-androstan-3-one site. Glycyl lysine isopeptide (Lys-Gly) (interchain with G-Cter in ubiquitin) cross-links involve residues Lys-838 and Lys-840. Thr-870 is a 17beta-hydroxy-5alpha-androstan-3-one binding site. Tyr-908 is modified (phosphotyrosine; by CSK).

This sequence belongs to the nuclear hormone receptor family. NR3 subfamily. Binds DNA as a homodimer. Part of a ternary complex containing AR, EFCAB6/DJBP and PARK7. Interacts with HIPK3 and NR0B2 in the presence of androgen. The ligand binding domain interacts with KAT7/HBO1 in the presence of dihydrotestosterone. Interacts with EFCAB6/DJBP, PQBP1, RANBP9, RBAK, SPDEF, SRA1, TGFB1I1 and RREB1. Interacts with ZMIZ1/ZIMP10 and ZMIZ2/ZMIP7 which both enhance its transactivation activity. Interacts with SLC30A9 and RAD54L2/ARIP4. Interacts with MACROD1 (via macro domain). Interacts via the ligand-binding domain with LXXLL and FXXLF motifs from NCOA1, NCOA2, NCOA3 and MAGEA11. Interacts (via nuclear receptor DNA binding domain and nuclear receptor ligand binding domain) with NCOA4. The AR N-terminal poly-Gln region binds Ran resulting in enhancement of AR-mediated transactivation. Ran-binding decreases as the poly-Gln length increases. Interacts with HIP1 (via coiled coil domain). Interacts (via ligand-binding domain) with TRIM68. Interacts with TNK2. Interacts with USP26. Interacts with RNF6. Interacts (regulated by RNF6 probably through polyubiquitination) with RNF14; regulates AR transcriptional activity. Interacts with PRMT2 and TRIM24. Interacts with RACK1. Interacts with RANBP10; this interaction enhances dihydrotestosterone-induced AR transcriptional activity. Interacts with PRPF6 in a hormone-independent way; this interaction enhances dihydrotestosterone-induced AR transcriptional activity. Interacts with STK4/MST1. Interacts with ZIPK/DAPK3. Interacts with LPXN. Interacts with MAK. Part of a complex containing AR, MAK and NCOA3. Interacts with CRY1. Interacts with CCAR1 and GATA2. Interacts with ZNF318. Interacts with BUD31. Interacts with ARID4A. Interacts with ARID4B. Interacts (via NR LBD domain) with ZBTB7A; the interaction is direct and androgen-dependent. Interacts with NCOR1. Interacts with NCOR2. Interacts with CRY2 in a ligand-dependent manner. Post-translationally, phosphorylation by TNK2 enhances the DNA-binding and transcriptional activity. Phosphorylation at Ser-69 by CDK9 regulates AR promoter selectivity and cell growth. In terms of processing, sumoylated on Lys-394 (major) and Lys-513. Ubiquitinated. Deubiquitinated by USP26. 'Lys-6' and 'Lys-27'-linked polyubiquitination by RNF6 modulates AR transcriptional activity and specificity. Palmitoylated by ZDHHC7 and ZDHHC21. Palmitoylation is required for plasma membrane targeting and for rapid intracellular signaling via ERK and AKT kinases and cAMP generation.

It localises to the nucleus. The protein resides in the cytoplasm. Its function is as follows. Steroid hormone receptors are ligand-activated transcription factors that regulate eukaryotic gene expression and affect cellular proliferation and differentiation in target tissues. Transcription factor activity is modulated by bound coactivator and corepressor proteins like ZBTB7A that recruits NCOR1 and NCOR2 to the androgen response elements/ARE on target genes, negatively regulating androgen receptor signaling and androgen-induced cell proliferation. Transcription activation is also down-regulated by NR0B2. Activated, but not phosphorylated, by HIPK3 and ZIPK/DAPK3. This Crocuta crocuta (Spotted hyena) protein is Androgen receptor (AR).